The following is a 571-amino-acid chain: Adenine deaminase (571 aa).

It belongs to the metallo-dependent hydrolases superfamily. Adenine deaminase family. Mn(2+) serves as cofactor.

The catalysed reaction is adenine + H2O + H(+) = hypoxanthine + NH4(+). This chain is Adenine deaminase, found in Dehalococcoides mccartyi (strain ATCC BAA-2100 / JCM 16839 / KCTC 5957 / BAV1).